Here is a 288-residue protein sequence, read N- to C-terminus: Bifunctional protein FolD (288 aa).

Residues 166 to 168 and Ile-232 contribute to the NADP(+) site; that span reads GAS.

Belongs to the tetrahydrofolate dehydrogenase/cyclohydrolase family. Homodimer.

The enzyme catalyses (6R)-5,10-methylene-5,6,7,8-tetrahydrofolate + NADP(+) = (6R)-5,10-methenyltetrahydrofolate + NADPH. The catalysed reaction is (6R)-5,10-methenyltetrahydrofolate + H2O = (6R)-10-formyltetrahydrofolate + H(+). Its pathway is one-carbon metabolism; tetrahydrofolate interconversion. Its function is as follows. Catalyzes the oxidation of 5,10-methylenetetrahydrofolate to 5,10-methenyltetrahydrofolate and then the hydrolysis of 5,10-methenyltetrahydrofolate to 10-formyltetrahydrofolate. This Salmonella heidelberg (strain SL476) protein is Bifunctional protein FolD.